The chain runs to 339 residues: Anthranilate phosphoribosyltransferase (339 aa).

5-phospho-alpha-D-ribose 1-diphosphate contacts are provided by residues Gly81, 84-85 (GD), Ser89, 91-94 (NVSS), 109-117 (KHGNRALSS), and Ala121. Gly81 contacts anthranilate. Ser93 lines the Mg(2+) pocket. Asn112 lines the anthranilate pocket. Arg167 is a binding site for anthranilate. Mg(2+) contacts are provided by Asp225 and Glu226.

This sequence belongs to the anthranilate phosphoribosyltransferase family. In terms of assembly, homodimer. The cofactor is Mg(2+).

The enzyme catalyses N-(5-phospho-beta-D-ribosyl)anthranilate + diphosphate = 5-phospho-alpha-D-ribose 1-diphosphate + anthranilate. It functions in the pathway amino-acid biosynthesis; L-tryptophan biosynthesis; L-tryptophan from chorismate: step 2/5. Catalyzes the transfer of the phosphoribosyl group of 5-phosphorylribose-1-pyrophosphate (PRPP) to anthranilate to yield N-(5'-phosphoribosyl)-anthranilate (PRA). The polypeptide is Anthranilate phosphoribosyltransferase (Brucella ovis (strain ATCC 25840 / 63/290 / NCTC 10512)).